Here is a 1212-residue protein sequence, read N- to C-terminus: DNA-directed RNA polymerase subunit beta'' (1212 aa).

4 residues coordinate Zn(2+): Cys229, Cys302, Cys309, and Cys312. The tract at residues 1162 to 1212 is disordered; the sequence is QKETSKNKKETSKNKKETSKNKKETSKNKKETSKNKKETSKNKKEASKNKK.

It belongs to the RNA polymerase beta' chain family. RpoC2 subfamily. In plastids the minimal PEP RNA polymerase catalytic core is composed of four subunits: alpha, beta, beta', and beta''. When a (nuclear-encoded) sigma factor is associated with the core the holoenzyme is formed, which can initiate transcription. Requires Zn(2+) as cofactor.

Its subcellular location is the plastid. The protein localises to the chloroplast. The catalysed reaction is RNA(n) + a ribonucleoside 5'-triphosphate = RNA(n+1) + diphosphate. Functionally, DNA-dependent RNA polymerase catalyzes the transcription of DNA into RNA using the four ribonucleoside triphosphates as substrates. The protein is DNA-directed RNA polymerase subunit beta'' of Cryptomeria japonica (Japanese cedar).